The following is a 557-amino-acid chain: MNKNIEQFPRKTTLTPQQKLEQLMEQHKTVHLTELFDKEQDRFAKYCVGCEDLVFDFSKQRINQPILDALVQLAESKQLNKWIDTLFSQNKINYTEQREAMHWALRLPADNQVYPELAKQVSDQLERMYQLVNKIHEGQYRGATGEVIQDVVNIGVGGSDLGPLMVSHALSDFKVKTAKPLNIRFVSTMDGSQLSDILHQLRPETTLFIVSSKSFSTIDTLSNAHTARKWLEKALGRESSILKSHFIGVSTKPDKMTEWGIHPDNQFLLWDWVGGRYSLWSCIGLPIALTIGVEGFKAFLAGAHGIDEHFRTTEFHQNIPVLMGLMGIWNTNYLNLKTHAVLPYDGRLKYFTSYLQQLEMESNGKSTQRNGQKVENTTCPIVWGEVGPNAQHAFYQLLHQGTQKVSCDFIAPMHRYNANHFTYVENADALIDQHLLALSNCLAQSRLLAFGNDALKVDQREQLPAYKQYEGNQPSTTMLLKELSPRTMGKLIALYEHKVFVQSVIWDINPFDQWGVEKGKEIANDLLPILNGESSDLSHLDDSTQGLIQFLLGKSNG.

The active-site Proton donor is Glu361. Catalysis depends on residues His392 and Lys520.

The protein belongs to the GPI family.

The protein resides in the cytoplasm. The enzyme catalyses alpha-D-glucose 6-phosphate = beta-D-fructose 6-phosphate. It functions in the pathway carbohydrate biosynthesis; gluconeogenesis. It participates in carbohydrate degradation; glycolysis; D-glyceraldehyde 3-phosphate and glycerone phosphate from D-glucose: step 2/4. Its function is as follows. Catalyzes the reversible isomerization of glucose-6-phosphate to fructose-6-phosphate. This Acinetobacter baylyi (strain ATCC 33305 / BD413 / ADP1) protein is Glucose-6-phosphate isomerase.